A 349-amino-acid chain; its full sequence is N-acetyl-gamma-glutamyl-phosphate reductase (349 aa).

Cysteine 153 is an active-site residue.

Belongs to the NAGSA dehydrogenase family. Type 1 subfamily.

It is found in the cytoplasm. It carries out the reaction N-acetyl-L-glutamate 5-semialdehyde + phosphate + NADP(+) = N-acetyl-L-glutamyl 5-phosphate + NADPH + H(+). It functions in the pathway amino-acid biosynthesis; L-arginine biosynthesis; N(2)-acetyl-L-ornithine from L-glutamate: step 3/4. Catalyzes the NADPH-dependent reduction of N-acetyl-5-glutamyl phosphate to yield N-acetyl-L-glutamate 5-semialdehyde. In Magnetococcus marinus (strain ATCC BAA-1437 / JCM 17883 / MC-1), this protein is N-acetyl-gamma-glutamyl-phosphate reductase.